Consider the following 203-residue polypeptide: Gramillins biosynthetic cluster protein FGSG_00038 (203 aa).

It participates in mycotoxin biosynthesis. Its function is as follows. Part of the gene cluster that mediates the biosynthesis of gramillins A and B, bicyclic lipopeptides that induce cell death in maize leaves but not in wheat leaves. The nonribosomal peptide synthetase GRA1 incorporates respectively a glutamic adic (Glu), a leucine (Leu), a serine (Ser), a hydroxyglutamine (HOGln), a 2-amino decanoic acid, and 2 cysteins (CysB and CysA). The biosynthesis of 2-amino decanoic acid incorporated in gramillins could be initiated by a fatty acid synthase composed of the alpha and beta subunits FGSG_00036 and FGSG_11656. The cytochrome P450 monooxygenase FGSG_15680 could hydroxylate the fatty acid chain. Subsequent oxidation to the ketone by the oxidoreductase FGSG_00048 and transamination by aminotransferase FGSG_00049 could form 2-amino-decanoic acid. On the other hand, FGSG_15680 could also be responsible for the HO-modified glutamine at the gamma-position. Whether hydroxylation occurs on the fully assembled product or on the Gln residue prior to assembly into the gramillins requires further proof. The thioredoxin FGSG_00043 could also be required for the disulfide-bond formation between CysA and CysB. The specific involvement of the remaining proteins from the cluster is more difficult to discern, but could have broader regulatory (FGSG_00040 and FGSG_11657) or enzymatic functions (FGSG_00044 and FGSG_00045). The final C-domain of GRA1 does not possess the expected sequence of a termination CT domain, often implicated in macrocyclization and release of a cyclopeptidein fungal NRPs; and the thioesterase FGSG_00047 may act in concert with the terminal C-domain of GRA1 to catalyze the formation of the macrocyclic anhydride and release of the products. The chain is Gramillins biosynthetic cluster protein FGSG_00038 from Gibberella zeae (strain ATCC MYA-4620 / CBS 123657 / FGSC 9075 / NRRL 31084 / PH-1) (Wheat head blight fungus).